A 691-amino-acid chain; its full sequence is Protein simr-1 (691 aa).

Residues 139–204 enclose the Tudor; degenerate domain; it reads EAEITPGTIY…TLFHLGKFTI (66 aa). Disordered stretches follow at residues 547–573 and 588–618; these read TGPC…DMSI and DNLN…TTNS. 2 stretches are compositionally biased toward polar residues: residues 549-573 and 588-598; these read PCGS…DMSI and DNLNDTENWPN.

It is found in the cytoplasm. It localises to the perinuclear region. Acts downstream of piRNA production to promote mediator complex-dependent endogenous siRNA biogenesis from piRNA-target mRNAs in the RNA interference pathway in germ cells. Not required to identify target mRNA by the piRNA pathway. Plays a role in both spermatogenesis and oogenesis and in maintaining fertility over multiple generations, probably by directing mutator-dependent silencing to piRNA-targeted genes. This chain is Protein simr-1, found in Caenorhabditis elegans.